The following is a 490-amino-acid chain: Tandem C2 domains nuclear protein (490 aa).

Ser83, Ser156, Ser168, Ser174, and Ser211 each carry phosphoserine. Positions 189–215 (HDSLSSVPSSSSSRKNSQGSNRSLDTI) are disordered. Low complexity predominate over residues 192–211 (LSSVPSSSSSRKNSQGSNRS). Phosphothreonine is present on residues Thr214 and Thr216. Ser218 is modified (phosphoserine). C2 domains are found at residues 223–342 (DFGR…SLDI) and 344–471 (PPSK…NQWK). Positions 447-449 (RRK) match the Nuclear localization signal motif.

The protein resides in the nucleus. The protein is Tandem C2 domains nuclear protein (TC2N) of Homo sapiens (Human).